The following is a 192-amino-acid chain: MSERNSAVLELLNEDDVSRTIARIAHQIIEKTALDSKDADRVMLLGIPSGGVPLARRLAEKIEEFSGVSVDTGAVDITLYRDDLRNKPHRALQPTSIPAGGIDNTTVILVDDVLFSGRTIRAALDALRDVGRPNYIQLAVLVDRGHRQLPIRADYVGKNLPTARAEDVSVMLTEIDGRDAVTLTREDSEGDS.

Substrate-binding positions include 49–50, R90, 111–119, R144, and V168; these read SG and DDVLFSGRT. The short motif at 107-119 is the PRPP-binding element; sequence VILVDDVLFSGRT.

Belongs to the purine/pyrimidine phosphoribosyltransferase family. PyrR subfamily.

It carries out the reaction UMP + diphosphate = 5-phospho-alpha-D-ribose 1-diphosphate + uracil. Its function is as follows. Regulates the transcription of the pyrimidine nucleotide (pyr) operon in response to exogenous pyrimidines. In terms of biological role, also displays a weak uracil phosphoribosyltransferase activity which is not physiologically significant. This chain is Bifunctional protein PyrR, found in Corynebacterium glutamicum (strain ATCC 13032 / DSM 20300 / JCM 1318 / BCRC 11384 / CCUG 27702 / LMG 3730 / NBRC 12168 / NCIMB 10025 / NRRL B-2784 / 534).